Consider the following 473-residue polypeptide: MNINMKDNFKKWLDLQQKKTLLKFLTCGSVDDGKSTLIGRLLHDTKQIYDDQLFFLKSDSKRHGTQGNEIDLALVVDGLQSEREQGITIDVAYRYFSTNKRKFIIADTPGHEQYTRNMATGASTCDLSILLVDARKGLSEQTYRHSFISTLLGIKYLIVAINKMDLVNYKQEIFENIKKDFLIFSKKLANDLNIIFIPMSALLGENIVFKTKLMPWYQGVTLLSFLETIKIKNSISSEELRFPVQYINRPNSDFRGYSGILLSGRMHVGQTIKILPENINSRVSRIVTFDKELKKAEIGESITVVLKDEIDINRGDFFVNIDSILQPSQEAIIDIVWMTDNILLAGESYNVKLSGKKIRVYIKEILFKLDVNTLKKVKSHSLVLNSIGRVKIYFSKPVIFDNYSENRMTGNMIFIDLLTNITVGAGMIVNSLDKKGKIPSNKQKDFESDFYDLIIRHFPHWNIPKILMKKVYK.

In terms of domain architecture, tr-type G spans 19–238 (KTLLKFLTCG…IKIKNSISSE (220 aa)). Residues 28 to 35 (GSVDDGKS) form a G1 region. Position 28 to 35 (28 to 35 (GSVDDGKS)) interacts with GTP. Residues 86 to 90 (GITID) are G2. Positions 107–110 (DTPG) are G3. Residues 107 to 111 (DTPGH) and 162 to 165 (NKMD) each bind GTP. A G4 region spans residues 162-165 (NKMD). Residues 200 to 202 (SAL) are G5.

It belongs to the TRAFAC class translation factor GTPase superfamily. Classic translation factor GTPase family. CysN/NodQ subfamily. As to quaternary structure, heterodimer composed of CysD, the smaller subunit, and CysN.

The catalysed reaction is sulfate + ATP + H(+) = adenosine 5'-phosphosulfate + diphosphate. It participates in sulfur metabolism; hydrogen sulfide biosynthesis; sulfite from sulfate: step 1/3. Functionally, with CysD forms the ATP sulfurylase (ATPS) that catalyzes the adenylation of sulfate producing adenosine 5'-phosphosulfate (APS) and diphosphate, the first enzymatic step in sulfur assimilation pathway. APS synthesis involves the formation of a high-energy phosphoric-sulfuric acid anhydride bond driven by GTP hydrolysis by CysN coupled to ATP hydrolysis by CysD. This is Sulfate adenylyltransferase subunit 1 from Buchnera aphidicola subsp. Acyrthosiphon pisum (strain APS) (Acyrthosiphon pisum symbiotic bacterium).